A 2122-amino-acid polypeptide reads, in one-letter code: Pecanex-like protein 2 (2122 aa).

The next 2 membrane-spanning stretches (helical) occupy residues 36–53 (LYLW…HLAF) and 60–82 (ALFY…YRLH). Disordered regions lie at residues 92 to 164 (QHRS…ELPA) and 180 to 250 (QPEA…LVNP). Composition is skewed to polar residues over residues 146–157 (SRGQSVHSQHSS) and 185–203 (ASST…SQGR). Asparagine 288 is a glycosylation site (N-linked (GlcNAc...) asparagine). 2 stretches are compositionally biased toward low complexity: residues 392 to 407 (VTSS…AESA) and 458 to 476 (PDRC…PGST). Disordered stretches follow at residues 392–556 (VTSS…QIPN) and 575–634 (VVAP…PVFT). Basic and acidic residues predominate over residues 528–538 (STKEVVSDGEK). Residue asparagine 556 is glycosylated (N-linked (GlcNAc...) asparagine). A compositionally biased stretch (basic and acidic residues) spans 599-618 (TKEEAVENEKPNGRDPKPGK). Residues 625–634 (DPANGSPVFT) show a composition bias toward polar residues. Transmembrane regions (helical) follow at residues 825 to 845 (VAVL…NRGF), 849 to 869 (LWVL…LKSV), 882 to 902 (QIIA…ILLL), 933 to 953 (HLIV…FPQI), 976 to 998 (GITS…HAFC), 1010 to 1030 (HIPA…YHLS), 1080 to 1100 (LVIC…TVFL), 1105 to 1125 (FLSI…HHLL), 1174 to 1194 (YLLY…SISN), 1218 to 1238 (SFCN…FFHF), 1245 to 1265 (ESFL…GDLL), 1270 to 1290 (FVLA…HVFA), and 1305 to 1325 (TFAT…VIFI). Asparagine 1393, asparagine 1534, and asparagine 1802 each carry an N-linked (GlcNAc...) asparagine glycan. Disordered stretches follow at residues 1858–1943 (SVGQ…SSGP) and 1955–1991 (STSV…TTGH). Residues 1888–1898 (ESRDGSTEQPR) show a composition bias toward basic and acidic residues. A compositionally biased stretch (polar residues) spans 1922–1942 (SQSVQAHSAISQRPPTLSSSG). Residues 1968 to 1981 (SRLSLHTSAASLHS) show a composition bias toward low complexity. Asparagine 2039 carries an N-linked (GlcNAc...) asparagine glycan. Residues 2097–2122 (VLCRRASQEDMGLDDTASQQSTSDEQ) form a disordered region. Residues 2112 to 2122 (TASQQSTSDEQ) are compositionally biased toward polar residues.

Belongs to the pecanex family.

It is found in the membrane. Functionally, may play a role in tumorigenesis. The polypeptide is Pecanex-like protein 2 (Mus musculus (Mouse)).